The sequence spans 75 residues: UPF0346 protein LSL_0716 (75 aa).

Belongs to the UPF0346 family.

In Ligilactobacillus salivarius (strain UCC118) (Lactobacillus salivarius), this protein is UPF0346 protein LSL_0716.